We begin with the raw amino-acid sequence, 135 residues long: Ribonuclease P protein component (135 aa).

Positions 115 to 135 (TNETVSPVSDTPLPQHERGSQ) are disordered.

This sequence belongs to the RnpA family. In terms of assembly, consists of a catalytic RNA component (M1 or rnpB) and a protein subunit.

It carries out the reaction Endonucleolytic cleavage of RNA, removing 5'-extranucleotides from tRNA precursor.. Functionally, RNaseP catalyzes the removal of the 5'-leader sequence from pre-tRNA to produce the mature 5'-terminus. It can also cleave other RNA substrates such as 4.5S RNA. The protein component plays an auxiliary but essential role in vivo by binding to the 5'-leader sequence and broadening the substrate specificity of the ribozyme. The chain is Ribonuclease P protein component from Chloroflexus aurantiacus (strain ATCC 29366 / DSM 635 / J-10-fl).